Consider the following 87-residue polypeptide: Small ribosomal subunit protein bS16 (87 aa).

The protein belongs to the bacterial ribosomal protein bS16 family.

This Variovorax paradoxus (strain S110) protein is Small ribosomal subunit protein bS16.